Consider the following 214-residue polypeptide: Outer-membrane lipoprotein LolB (214 aa).

Residues 1 to 25 (MNNLKRFTKSIFSCIALSGLLFLGG) form the signal peptide. Cys-26 carries N-palmitoyl cysteine lipidation. Cys-26 carries S-diacylglycerol cysteine lipidation.

Belongs to the LolB family. As to quaternary structure, monomer.

Its subcellular location is the cell outer membrane. Plays a critical role in the incorporation of lipoproteins in the outer membrane after they are released by the LolA protein. In Shewanella oneidensis (strain ATCC 700550 / JCM 31522 / CIP 106686 / LMG 19005 / NCIMB 14063 / MR-1), this protein is Outer-membrane lipoprotein LolB.